A 723-amino-acid polypeptide reads, in one-letter code: Fatty acid oxidation complex subunit alpha (723 aa).

Residues 1–189 (MIYQAKTLQV…KVGLLDAIVD (189 aa)) are enoyl-CoA hydratase/isomerase. Asp296 contacts substrate. Residues 311 to 723 (SQDTQHAAVL…FYSAQQASAL (413 aa)) form a 3-hydroxyacyl-CoA dehydrogenase region. Residues Met325, Asp344, 401–403 (VVE), Lys408, and Ser430 each bind NAD(+). Residue His451 is the For 3-hydroxyacyl-CoA dehydrogenase activity of the active site. Asn454 contacts NAD(+). Positions 501 and 661 each coordinate substrate.

This sequence in the N-terminal section; belongs to the enoyl-CoA hydratase/isomerase family. In the C-terminal section; belongs to the 3-hydroxyacyl-CoA dehydrogenase family. In terms of assembly, heterotetramer of two alpha chains (FadB) and two beta chains (FadA).

It catalyses the reaction a (3S)-3-hydroxyacyl-CoA + NAD(+) = a 3-oxoacyl-CoA + NADH + H(+). The catalysed reaction is a (3S)-3-hydroxyacyl-CoA = a (2E)-enoyl-CoA + H2O. The enzyme catalyses a 4-saturated-(3S)-3-hydroxyacyl-CoA = a (3E)-enoyl-CoA + H2O. It carries out the reaction (3S)-3-hydroxybutanoyl-CoA = (3R)-3-hydroxybutanoyl-CoA. It catalyses the reaction a (3Z)-enoyl-CoA = a 4-saturated (2E)-enoyl-CoA. The catalysed reaction is a (3E)-enoyl-CoA = a 4-saturated (2E)-enoyl-CoA. Its pathway is lipid metabolism; fatty acid beta-oxidation. Involved in the aerobic and anaerobic degradation of long-chain fatty acids via beta-oxidation cycle. Catalyzes the formation of 3-oxoacyl-CoA from enoyl-CoA via L-3-hydroxyacyl-CoA. It can also use D-3-hydroxyacyl-CoA and cis-3-enoyl-CoA as substrate. This is Fatty acid oxidation complex subunit alpha from Vibrio cholerae serotype O1 (strain ATCC 39541 / Classical Ogawa 395 / O395).